The sequence spans 386 residues: CUE domain-containing protein 1 (386 aa).

Positions 1-10 are enriched in low complexity; the sequence is MTSLFRRSSS. The disordered stretch occupies residues 1–40; sequence MTSLFRRSSSGSGGGGTAGARGGGGGTAAPQELNNSRPAR. The segment covering 11–27 has biased composition (gly residues); it reads GSGGGGTAGARGGGGGT. One can recognise a CUE domain in the interval 46–89; it reads EFNQAMDDFKTMFPNMDYDIIECVLRANSGAVDATIDQLLQMNL. Disordered regions lie at residues 147–172, 195–225, and 367–386; these read LAPP…RYRN, SIQG…DQES, and DFRG…REGQ. Residues 199–209 show a composition bias toward gly residues; that stretch reads NAGGPKPGSGE.

The protein is CUE domain-containing protein 1 (CUEDC1) of Homo sapiens (Human).